A 189-amino-acid polypeptide reads, in one-letter code: FUN14 domain-containing protein 2 (189 aa).

At 1-80 (METSAPRAGS…GQESGPSAEK (80 aa)) the chain is on the cytoplasmic side. Phosphoserine occurs at positions 10 and 53. Residues 81–101 (YSVATQLFIGGVTGWCTGFIF) traverse the membrane as a helical segment. Topologically, residues 102–107 (QNVGKL) are mitochondrial intermembrane. Residues 108-128 (AATAVGGGFFLLQLANHTGYI) traverse the membrane as a helical segment. Topologically, residues 129–164 (KVDWQRVEKDMKKAKEQLKIRKSNQMPTEVRSKAEE) are cytoplasmic. The residue at position 151 (S151) is a Phosphoserine. The helical transmembrane segment at 165–185 (VVSFVKKNVLVTGGFFGGFLL) threads the bilayer. The Mitochondrial intermembrane portion of the chain corresponds to 186 to 189 (GMAS).

The protein belongs to the FUN14 family.

It is found in the mitochondrion outer membrane. It localises to the nucleus. Its function is as follows. Binds directly and specifically 1,2-Diacyl-sn-glycero-3-phospho-(1'-myo-inositol-3',4',5'-bisphosphate) (PIP3) leading to the recruitment of PIP3 to mitochondria and may play a role in the regulation of the platelet activation via AKT/GSK3B/cGMP signaling pathways. May act as transcription factor that regulates SREBP1 (isoform SREBP-1C) expression in order to modulate triglyceride (TG) homeostasis in hepatocytes. This is FUN14 domain-containing protein 2 from Macaca mulatta (Rhesus macaque).